Reading from the N-terminus, the 337-residue chain is Transmembrane protein 120B (337 aa).

The stretch at 1–39 (MSLERCQSEWTEIEQEYQQLQETHKVYRQKLEELTNLQA) forms a coiled coil. 6 helical membrane passes run 100–122 (GLYLNLVLGNVNVTLLSNQAKFA), 130–150 (FKLYMTIILMFGAVTCLFLLN), 157–175 (IFNFLLVWYYCTLTIRESI), 185–205 (GWWVSHHYVSTFLSGVMLTWP), 268–288 (FLLPFLFFGHFWQLYNAVTLF), and 300–320 (QVFMLALTFLVLFLGNFLTTL).

This sequence belongs to the TMEM120 family.

The protein localises to the nucleus inner membrane. Necessary for efficient adipogenesis. Does not show ion channel activity. In Danio rerio (Zebrafish), this protein is Transmembrane protein 120B (tmem120b).